The following is a 248-amino-acid chain: 3-deoxy-manno-octulosonate cytidylyltransferase (248 aa).

It belongs to the KdsB family.

The protein resides in the cytoplasm. It carries out the reaction 3-deoxy-alpha-D-manno-oct-2-ulosonate + CTP = CMP-3-deoxy-beta-D-manno-octulosonate + diphosphate. It participates in nucleotide-sugar biosynthesis; CMP-3-deoxy-D-manno-octulosonate biosynthesis; CMP-3-deoxy-D-manno-octulosonate from 3-deoxy-D-manno-octulosonate and CTP: step 1/1. Its pathway is bacterial outer membrane biogenesis; lipopolysaccharide biosynthesis. Activates KDO (a required 8-carbon sugar) for incorporation into bacterial lipopolysaccharide in Gram-negative bacteria. The chain is 3-deoxy-manno-octulosonate cytidylyltransferase from Shigella boydii serotype 18 (strain CDC 3083-94 / BS512).